Consider the following 234-residue polypeptide: Transcriptional activator protein TraR (234 aa).

Residues 167–232 (TAEDAAWLDP…HLTALAIKRK (66 aa)) enclose the HTH luxR-type domain. The segment at residues 191–210 (MEEIADVEEVKYNSVRVKLR) is a DNA-binding region (H-T-H motif).

It belongs to the autoinducer-regulated transcriptional regulatory protein family.

In terms of biological role, positive regulation of conjugal transfer of Ti plasmids. In Agrobacterium vitis (Rhizobium vitis), this protein is Transcriptional activator protein TraR (traR).